The primary structure comprises 265 residues: 4-hydroxy-tetrahydrodipicolinate reductase (265 aa).

NAD(+) contacts are provided by residues 7 to 12 (GASGRM) and aspartate 33. Arginine 34 contributes to the NADP(+) binding site. Residues 96 to 98 (GTT) and 120 to 123 (AANM) contribute to the NAD(+) site. The active-site Proton donor/acceptor is histidine 153. A (S)-2,3,4,5-tetrahydrodipicolinate-binding site is contributed by histidine 154. The active-site Proton donor is lysine 157. 163 to 164 (GT) lines the (S)-2,3,4,5-tetrahydrodipicolinate pocket.

It belongs to the DapB family.

It is found in the cytoplasm. It carries out the reaction (S)-2,3,4,5-tetrahydrodipicolinate + NAD(+) + H2O = (2S,4S)-4-hydroxy-2,3,4,5-tetrahydrodipicolinate + NADH + H(+). The catalysed reaction is (S)-2,3,4,5-tetrahydrodipicolinate + NADP(+) + H2O = (2S,4S)-4-hydroxy-2,3,4,5-tetrahydrodipicolinate + NADPH + H(+). It functions in the pathway amino-acid biosynthesis; L-lysine biosynthesis via DAP pathway; (S)-tetrahydrodipicolinate from L-aspartate: step 4/4. Its function is as follows. Catalyzes the conversion of 4-hydroxy-tetrahydrodipicolinate (HTPA) to tetrahydrodipicolinate. This is 4-hydroxy-tetrahydrodipicolinate reductase from Burkholderia vietnamiensis (strain G4 / LMG 22486) (Burkholderia cepacia (strain R1808)).